We begin with the raw amino-acid sequence, 368 residues long: uncharacterized protein (368 aa).

Belongs to the YCR102c/YLR460c/YNL134c family.

This is an uncharacterized protein from Saccharomyces cerevisiae (strain ATCC 204508 / S288c) (Baker's yeast).